A 553-amino-acid polypeptide reads, in one-letter code: Solute carrier family 22 member 12 (553 aa).

A helical membrane pass occupies residues 16 to 36 (FQLLQAVALVTPILWVTTQNM). N-linked (GlcNAc...) asparagine glycans are attached at residues asparagine 56, asparagine 102, and asparagine 107. The next 11 membrane-spanning stretches (helical) occupy residues 146–166 (PMAQ…CGHA), 182–202 (LVSV…YCLF), 204–224 (FLVA…LMEW), 232–252 (LMMT…GSVA), 260–280 (MLQL…WWLP), 351–371 (FISM…ALDL), 378–398 (IFLL…GSLL), 407–427 (LCQA…ILVP), 435–455 (SSLA…VTIF), 466–486 (MTAV…GPLV), and 495–515 (WLPL…ALLL). Serine 534 bears the Phosphoserine mark.

Belongs to the major facilitator (TC 2.A.1) superfamily. Organic cation transporter (TC 2.A.1.19) family. In terms of assembly, interacts with PDZK1. In terms of processing, N-glycosylated. As to expression, expressed in the proximal tubular epithelial cells in kidney.

Its subcellular location is the apical cell membrane. It carries out the reaction urate(out) + (S)-lactate(in) = urate(in) + (S)-lactate(out). It catalyses the reaction nicotinate(in) + urate(out) = nicotinate(out) + urate(in). The catalysed reaction is urate(out) + n chloride(in) = urate(in) + n chloride(out). The enzyme catalyses orotate(out) + nicotinate(in) = orotate(in) + nicotinate(out). Electroneutral antiporter that translocates urate across the apical membrane of proximal tubular cells in exchange for monovalent organic or inorganic anions. Involved in renal reabsorption of urate and helps maintaining blood levels of uric acid. Mediates urate uptake by an exchange with organic anions such as (S)-lactate and nicotinate, and inorganic anion Cl(-). Other inorganic anions such as Br(-), I(-) and NO3(-) may also act as counteranions that exchange for urate. Also mediates orotate tubular uptake coupled with nicotinate efflux and to a lesser extent with lactate efflux, therefore displaying a potential role in orotate renal reabsorption. Orotate transport is Cl(-)-dependent. The polypeptide is Solute carrier family 22 member 12 (Slc22a12) (Rattus norvegicus (Rat)).